The sequence spans 747 residues: Polyribonucleotide nucleotidyltransferase (747 aa).

Mg(2+) is bound by residues Asp487 and Asp493. In terms of domain architecture, KH spans Pro554–Ile613. The S1 motif domain occupies Gly623 to Lys691. The segment at Lys691 to Asn747 is disordered. Residues Ser699–Lys712 are compositionally biased toward low complexity. Positions Ala727–Asn747 are enriched in basic and acidic residues.

This sequence belongs to the polyribonucleotide nucleotidyltransferase family. It depends on Mg(2+) as a cofactor.

The protein localises to the cytoplasm. The catalysed reaction is RNA(n+1) + phosphate = RNA(n) + a ribonucleoside 5'-diphosphate. Involved in mRNA degradation. Catalyzes the phosphorolysis of single-stranded polyribonucleotides processively in the 3'- to 5'-direction. This Rickettsia felis (strain ATCC VR-1525 / URRWXCal2) (Rickettsia azadi) protein is Polyribonucleotide nucleotidyltransferase.